A 156-amino-acid polypeptide reads, in one-letter code: ATP synthase subunit b (156 aa).

The chain crosses the membrane as a helical span at residues 7 to 27; the sequence is LFAQLVVFFILAWFTMKFVWP.

Belongs to the ATPase B chain family. In terms of assembly, F-type ATPases have 2 components, F(1) - the catalytic core - and F(0) - the membrane proton channel. F(1) has five subunits: alpha(3), beta(3), gamma(1), delta(1), epsilon(1). F(0) has four main subunits: a(1), b(2) and c(10-14). The alpha and beta chains form an alternating ring which encloses part of the gamma chain. F(1) is attached to F(0) by a central stalk formed by the gamma and epsilon chains, while a peripheral stalk is formed by the delta and b chains.

Its subcellular location is the cell inner membrane. In terms of biological role, f(1)F(0) ATP synthase produces ATP from ADP in the presence of a proton or sodium gradient. F-type ATPases consist of two structural domains, F(1) containing the extramembraneous catalytic core and F(0) containing the membrane proton channel, linked together by a central stalk and a peripheral stalk. During catalysis, ATP synthesis in the catalytic domain of F(1) is coupled via a rotary mechanism of the central stalk subunits to proton translocation. Its function is as follows. Component of the F(0) channel, it forms part of the peripheral stalk, linking F(1) to F(0). The chain is ATP synthase subunit b from Methylibium petroleiphilum (strain ATCC BAA-1232 / LMG 22953 / PM1).